A 327-amino-acid chain; its full sequence is Methionyl-tRNA formyltransferase (327 aa).

121 to 124 (SLLP) serves as a coordination point for (6S)-5,6,7,8-tetrahydrofolate.

It belongs to the Fmt family.

It carries out the reaction L-methionyl-tRNA(fMet) + (6R)-10-formyltetrahydrofolate = N-formyl-L-methionyl-tRNA(fMet) + (6S)-5,6,7,8-tetrahydrofolate + H(+). In terms of biological role, attaches a formyl group to the free amino group of methionyl-tRNA(fMet). The formyl group appears to play a dual role in the initiator identity of N-formylmethionyl-tRNA by promoting its recognition by IF2 and preventing the misappropriation of this tRNA by the elongation apparatus. The protein is Methionyl-tRNA formyltransferase of Burkholderia pseudomallei (strain 668).